Consider the following 94-residue polypeptide: Integration host factor subunit beta (94 aa).

Belongs to the bacterial histone-like protein family. In terms of assembly, heterodimer of an alpha and a beta chain.

This protein is one of the two subunits of integration host factor, a specific DNA-binding protein that functions in genetic recombination as well as in transcriptional and translational control. In Pectobacterium atrosepticum (strain SCRI 1043 / ATCC BAA-672) (Erwinia carotovora subsp. atroseptica), this protein is Integration host factor subunit beta.